Reading from the N-terminus, the 428-residue chain is tRNA(Ile2) 2-agmatinylcytidine synthetase TiaS (428 aa).

The protein belongs to the TiaS family.

The protein resides in the cytoplasm. It catalyses the reaction cytidine(34) in tRNA(Ile2) + agmatine + ATP + H2O = 2-agmatinylcytidine(34) in tRNA(Ile2) + AMP + 2 phosphate + 2 H(+). ATP-dependent agmatine transferase that catalyzes the formation of 2-agmatinylcytidine (agm2C) at the wobble position (C34) of tRNA(Ile2), converting the codon specificity from AUG to AUA. The polypeptide is tRNA(Ile2) 2-agmatinylcytidine synthetase TiaS (Methanosarcina acetivorans (strain ATCC 35395 / DSM 2834 / JCM 12185 / C2A)).